Consider the following 361-residue polypeptide: BBSome complex member bbs-5 (361 aa).

The protein belongs to the BBS5 family. Part of BBSome complex, that contains at least bbs-1, bbs-2, bbs-4, bbs-5, osm-12, bbs-8/ttc-8 and bbs-9. Interacts with bbs-4 (via C-terminus); the interaction is direct.

It is found in the cell projection. The protein resides in the cilium membrane. It localises to the cytoplasm. The protein localises to the cytoskeleton. Its subcellular location is the cilium basal body. It is found in the microtubule organizing center. The protein resides in the centrosome. It localises to the centriolar satellite. In terms of biological role, component of the BBSome complex. The BBSome complex is thought to function as a coat complex required for sorting of specific membrane proteins to the primary cilia. The BBSome complex is required for ciliogenesis but is dispensable for centriolar satellite function. Required for BBSome complex ciliary localization but not for the proper complex assembly. Required, redundantly with bbs-4, for cilia biogenesis and both the assembly and movement of intraflagellar transport proteins along the ciliary axoneme. Plays a role in the removal of degraded mechanosensory receptors within the cilia. In Caenorhabditis elegans, this protein is BBSome complex member bbs-5.